Here is a 151-residue protein sequence, read N- to C-terminus: Large ribosomal subunit protein bL9 (151 aa).

The protein belongs to the bacterial ribosomal protein bL9 family.

Functionally, binds to the 23S rRNA. This Azoarcus sp. (strain BH72) protein is Large ribosomal subunit protein bL9.